The following is a 259-amino-acid chain: Hydroxyacylglutathione hydrolase (259 aa).

Zn(2+) is bound by residues H56, H58, D60, H61, H112, D133, and H171. Positions 224-238 (RTRETSVKEKADERS) are enriched in basic and acidic residues. The segment at 224-245 (RTRETSVKEKADERSSGQNTSQ) is disordered.

It belongs to the metallo-beta-lactamase superfamily. Glyoxalase II family. Monomer. Requires Zn(2+) as cofactor.

It carries out the reaction an S-(2-hydroxyacyl)glutathione + H2O = a 2-hydroxy carboxylate + glutathione + H(+). The protein operates within secondary metabolite metabolism; methylglyoxal degradation; (R)-lactate from methylglyoxal: step 2/2. Its function is as follows. Thiolesterase that catalyzes the hydrolysis of S-D-lactoyl-glutathione to form glutathione and D-lactic acid. This chain is Hydroxyacylglutathione hydrolase, found in Pseudomonas savastanoi pv. phaseolicola (strain 1448A / Race 6) (Pseudomonas syringae pv. phaseolicola (strain 1448A / Race 6)).